Reading from the N-terminus, the 295-residue chain is Protein transport protein SSO2 (295 aa).

The segment covering 1-18 (MSNPYQNSQNGYQQNNSY) has biased composition (low complexity). Residues 1 to 31 (MSNPYQNSQNGYQQNNSYELNNYPNKQYSSS) form a disordered region. At 1–270 (MSNPYQNSQN…SAKSARKKKL (270 aa)) the chain is on the cytoplasmic side. The span at 19–31 (ELNNYPNKQYSSS) shows a compositional bias: polar residues. The stretch at 33-110 (EDDFVQFMNE…NRIKNVQTQA (78 aa)) forms a coiled coil. The region spanning 196–258 (LNEVQVRHRE…EQGVGHTNKA (63 aa)) is the t-SNARE coiled-coil homology domain. The chain crosses the membrane as a helical; Anchor for type IV membrane protein span at residues 271 to 291 (WCFFICLLIVIILAVILGAYF). The Extracellular segment spans residues 292-295 (GTRK).

The protein belongs to the syntaxin family.

Its subcellular location is the membrane. Late secretory t-SNARE protein required for secretion and proper cytokinesis. Plays an important role in the secretion of virulence-associated extracellular enzymes and vesicle-mediated polarized hyphal growth. This chain is Protein transport protein SSO2 (SSO2), found in Candida albicans (strain SC5314 / ATCC MYA-2876) (Yeast).